Consider the following 320-residue polypeptide: Ferrochelatase (320 aa).

Positions 194 and 275 each coordinate Fe cation.

It belongs to the ferrochelatase family. As to quaternary structure, monomer.

It is found in the cytoplasm. The enzyme catalyses heme b + 2 H(+) = protoporphyrin IX + Fe(2+). Its pathway is porphyrin-containing compound metabolism; protoheme biosynthesis; protoheme from protoporphyrin-IX: step 1/1. Its function is as follows. Catalyzes the ferrous insertion into protoporphyrin IX. This chain is Ferrochelatase, found in Shigella flexneri serotype 5b (strain 8401).